We begin with the raw amino-acid sequence, 229 residues long: Orotidine 5'-phosphate decarboxylase (229 aa).

Residues aspartate 10, lysine 32, 59 to 68 (DLKFHDIPNT), threonine 119, arginine 180, glutamine 189, glycine 209, and arginine 210 each bind substrate. Lysine 61 acts as the Proton donor in catalysis.

This sequence belongs to the OMP decarboxylase family. Type 1 subfamily. In terms of assembly, homodimer.

It catalyses the reaction orotidine 5'-phosphate + H(+) = UMP + CO2. It participates in pyrimidine metabolism; UMP biosynthesis via de novo pathway; UMP from orotate: step 2/2. Catalyzes the decarboxylation of orotidine 5'-monophosphate (OMP) to uridine 5'-monophosphate (UMP). The chain is Orotidine 5'-phosphate decarboxylase from Legionella pneumophila (strain Corby).